Here is a 116-residue protein sequence, read N- to C-terminus: Ly-6/neurotoxin-like protein 1 (116 aa).

A signal peptide spans 1–20 (MTPLLTLILVVLMGLPLAQA). The region spanning 21-107 (LDCHVCAYNG…TPATLALAPI (87 aa)) is the UPAR/Ly6 domain. 5 disulfides stabilise this stretch: C23–C46, C26–C33, C39–C64, C68–C85, and C86–C91. C91 is lipidated: GPI-anchor amidated cysteine. The propeptide at 92 to 116 (NGTGLATPATLALAPILLATLWGLL) is removed in mature form.

Interacts with nAChRs containing alpha-4:beta-2 (CHRNA4:CHRNB2) and alpha-7 (CHRNA7) subunits. Interacts with CHRNA4 probably in the endoplasmic reticulum prior to nAChR pentameric assembly. Interacts with KCNA2/Potassium voltage-gated channel subfamily A member 2.

The protein localises to the cell membrane. Its subcellular location is the cell projection. The protein resides in the dendrite. It localises to the endoplasmic reticulum. In terms of biological role, acts in different tissues through interaction to nicotinic acetylcholine receptors (nAChRs). The proposed role as modulator of nAChR activity seems to be dependent on the nAChR subtype and stoichiometry, and to involve an effect on nAChR trafficking and its cell surface expression, and on single channel properties of the nAChR inserted in the plasma membrane. Modulates functional properties of nicotinic acetylcholine receptors (nAChRs) to prevent excessive excitation, and hence neurodegeneration. Enhances desensitization by increasing both the rate and extent of desensitization of alpha-4:beta-2-containing nAChRs and slowing recovery from desensitization. Promotes large amplitude ACh-evoked currents through alpha-4:beta-2 nAChRs. Is involved in regulation of the nAChR pentameric assembly in the endoplasmic reticulum. Shifts stoichiometry from high sensitivity alpha-4(2):beta-2(3) to low sensitivity alpha-4(3):beta-2(2) nAChR. In vitro modulates alpha-3:beta-4-containing nAChRs. Reduces cell surface expression of (alpha-3:beta-4)(2):beta-4 and (alpha-3:beta-4)(2):alpha-5 nAChRs suggesting an interaction with nAChR alpha-3(-):(+)beta-4 subunit interfaces and an allosteric mode. Corresponding single channel effects characterized by decreased unitary conductance, altered burst proportions and enhanced desensitization/inactivation seem to depend on nAChR alpha:alpha subunit interfaces and are greater in (alpha-3:beta-2)(2):alpha-3 when compared to (alpha-3:beta-2)(2):alpha-5 nAChRs. Prevents plasticity in the primary visual cortex late in life. This is Ly-6/neurotoxin-like protein 1 from Homo sapiens (Human).